A 267-amino-acid chain; its full sequence is GTP cyclohydrolase FolE2 (267 aa).

Belongs to the GTP cyclohydrolase IV family.

It carries out the reaction GTP + H2O = 7,8-dihydroneopterin 3'-triphosphate + formate + H(+). It functions in the pathway cofactor biosynthesis; 7,8-dihydroneopterin triphosphate biosynthesis; 7,8-dihydroneopterin triphosphate from GTP: step 1/1. In terms of biological role, converts GTP to 7,8-dihydroneopterin triphosphate. This is GTP cyclohydrolase FolE2 from Nitrosococcus oceani (strain ATCC 19707 / BCRC 17464 / JCM 30415 / NCIMB 11848 / C-107).